Reading from the N-terminus, the 506-residue chain is Dual specificity protein kinase shkC (506 aa).

The disordered stretch occupies residues 1-21; that stretch reads MDSGLGSSYPEERSGPPEIRP. The span at 10–21 shows a compositional bias: basic and acidic residues; the sequence is PEERSGPPEIRP. One can recognise a Protein kinase domain in the interval 24–284; that stretch reads INFEELIGTG…IISALDHVII (261 aa). ATP contacts are provided by residues 30-38 and Lys51; that span reads IGTGSFGKV. Asp147 (proton acceptor) is an active-site residue. The region spanning 396–488 is the SH2 domain; that stretch reads WFHGDLDTTE…KLDSQLGVPN (93 aa).

The protein belongs to the protein kinase superfamily. TKL Ser/Thr protein kinase family. SH2 domain-containing protein kinase subfamily.

It localises to the membrane. The catalysed reaction is L-seryl-[protein] + ATP = O-phospho-L-seryl-[protein] + ADP + H(+). The enzyme catalyses L-threonyl-[protein] + ATP = O-phospho-L-threonyl-[protein] + ADP + H(+). Required for proper chemotaxis and phagocytosis; proper spatiotemporal control of F-actin levels in chemotaxing cells. Negative regulator of the PI3K (phosphatidylinositol 3 kinase) pathway. Predominantly phosphorylates serines and threonines and tyrosines at a lower level. This is Dual specificity protein kinase shkC (shkC) from Dictyostelium discoideum (Social amoeba).